A 441-amino-acid chain; its full sequence is Serine carboxypeptidase-like 1 (441 aa).

The N-terminal stretch at 1 to 29 (MANKYVSSVLKSLLVLLHLVFLSKQHVDS) is a signal peptide. 3 disulfide bridges follow: Cys88–Cys331, Cys252–Cys266, and Cys290–Cys297. A glycan (N-linked (GlcNAc...) asparagine) is linked at Asn109. The active site involves Ser184. An N-linked (GlcNAc...) asparagine glycan is attached at Asn350. Asp366 is an active-site residue. The N-linked (GlcNAc...) asparagine glycan is linked to Asn382. The active site involves His419.

Belongs to the peptidase S10 family. In terms of tissue distribution, expressed in seedlings and roots.

The protein localises to the secreted. Its function is as follows. Probable carboxypeptidase. The chain is Serine carboxypeptidase-like 1 (SCPL1) from Arabidopsis thaliana (Mouse-ear cress).